The chain runs to 646 residues: 1-deoxy-D-xylulose-5-phosphate synthase (646 aa).

Thiamine diphosphate contacts are provided by residues H86 and A127–S129. D158 provides a ligand contact to Mg(2+). Thiamine diphosphate contacts are provided by residues G159–A160, N188, Y295, and E377. N188 is a binding site for Mg(2+).

This sequence belongs to the transketolase family. DXPS subfamily. As to quaternary structure, homodimer. Requires Mg(2+) as cofactor. It depends on thiamine diphosphate as a cofactor.

The catalysed reaction is D-glyceraldehyde 3-phosphate + pyruvate + H(+) = 1-deoxy-D-xylulose 5-phosphate + CO2. It functions in the pathway metabolic intermediate biosynthesis; 1-deoxy-D-xylulose 5-phosphate biosynthesis; 1-deoxy-D-xylulose 5-phosphate from D-glyceraldehyde 3-phosphate and pyruvate: step 1/1. Functionally, catalyzes the acyloin condensation reaction between C atoms 2 and 3 of pyruvate and glyceraldehyde 3-phosphate to yield 1-deoxy-D-xylulose-5-phosphate (DXP). The chain is 1-deoxy-D-xylulose-5-phosphate synthase from Burkholderia ambifaria (strain ATCC BAA-244 / DSM 16087 / CCUG 44356 / LMG 19182 / AMMD) (Burkholderia cepacia (strain AMMD)).